A 280-amino-acid chain; its full sequence is Dermonecrotic toxin LgSicTox-alphaIC1 (280 aa).

The active site involves histidine 12. Mg(2+) is bound by residues glutamate 32 and aspartate 34. Histidine 48 acts as the Nucleophile in catalysis. 2 disulfides stabilise this stretch: cysteine 52/cysteine 58 and cysteine 54/cysteine 197. Aspartate 92 is a binding site for Mg(2+).

The protein belongs to the arthropod phospholipase D family. Class II subfamily. The cofactor is Mg(2+). In terms of tissue distribution, expressed by the venom gland.

The protein resides in the secreted. It carries out the reaction an N-(acyl)-sphingosylphosphocholine = an N-(acyl)-sphingosyl-1,3-cyclic phosphate + choline. It catalyses the reaction an N-(acyl)-sphingosylphosphoethanolamine = an N-(acyl)-sphingosyl-1,3-cyclic phosphate + ethanolamine. The enzyme catalyses a 1-acyl-sn-glycero-3-phosphocholine = a 1-acyl-sn-glycero-2,3-cyclic phosphate + choline. The catalysed reaction is a 1-acyl-sn-glycero-3-phosphoethanolamine = a 1-acyl-sn-glycero-2,3-cyclic phosphate + ethanolamine. Dermonecrotic toxins cleave the phosphodiester linkage between the phosphate and headgroup of certain phospholipids (sphingolipid and lysolipid substrates), forming an alcohol (often choline) and a cyclic phosphate. This toxin acts on sphingomyelin (SM) with high activity. It may also act on ceramide phosphoethanolamine (CPE), lysophosphatidylcholine (LPC) and lysophosphatidylethanolamine (LPE), but not on lysophosphatidylserine (LPS), and lysophosphatidylglycerol (LPG). It acts by transphosphatidylation, releasing exclusively cyclic phosphate products as second products. Induces platelet aggregation in platelet rich plasma, but not in washed platelet, indicating that this activity is dependent on plasma components. Also induces hemolysis. In vivo, the recombinant protein evokes an intense inflammatory reaction and dermonecrosis, similar to those induced by L.gaucho total venom. Is a good immunogen, capable of inducing immunoprotection in test animals. Functionally, anionic antimicrobial peptide that shows antimicrobial activity against Gram-negative bacteria (MIC=1.15-4.6 uM) (tested on E.coli, P.aeruginosa, and E.cloacae), but not on Gram-negative bacteria (M.luteus, S.aureus, and B.subtilis), neither on fungi and yeasts (A.niger, C.albicans and C.krusei). Does not show hemolytic effects against human erythrocytes, and has no cytotoxic effects against human cervical carcinoma cells (HeLa). The chain is Dermonecrotic toxin LgSicTox-alphaIC1 from Loxosceles gaucho (Spider).